A 509-amino-acid chain; its full sequence is Aromatase (509 aa).

Cys-437 contacts heme.

This sequence belongs to the cytochrome P450 family. Heme serves as cofactor.

It localises to the membrane. The catalysed reaction is testosterone + 3 reduced [NADPH--hemoprotein reductase] + 3 O2 = 17beta-estradiol + formate + 3 oxidized [NADPH--hemoprotein reductase] + 4 H2O + 4 H(+). It catalyses the reaction androst-4-ene-3,17-dione + 3 reduced [NADPH--hemoprotein reductase] + 3 O2 = estrone + formate + 3 oxidized [NADPH--hemoprotein reductase] + 4 H2O + 4 H(+). Its function is as follows. Catalyzes the formation of aromatic C18 estrogens from C19 androgens. The polypeptide is Aromatase (CYP19A1) (Taeniopygia guttata (Zebra finch)).